We begin with the raw amino-acid sequence, 359 residues long: Guanine nucleotide-binding protein alpha-4 subunit (359 aa).

Gly-2 carries N-myristoyl glycine lipidation. Cys-3 carries the S-palmitoyl cysteine lipid modification. Positions 31–359 constitute a G-alpha domain; it reads GEIKLLLLGA…RNNLYLCGLY (329 aa). The segment at 34 to 47 is G1 motif; the sequence is KLLLLGAGESGKST. GTP-binding positions include 39–46, 178–184, 203–207, 272–275, and Ala-331; these read GAGESGKS, LRARVKS, DVGGQ, and NKMD. Ser-46 contacts Mg(2+). Residues 176-184 form a G2 motif region; sequence DILRARVKS. Residues 199-208 form a G3 motif region; sequence FKMFDVGGQR. A G4 motif region spans residues 268-275; that stretch reads ILFLNKMD. The tract at residues 329–334 is G5 motif; sequence TCATDT.

This sequence belongs to the G-alpha family. G(i/o/t/z) subfamily. In terms of assembly, g proteins are composed of 3 units; alpha, beta and gamma. The alpha chain contains the guanine nucleotide binding site. Expressed in ASI neurons.

Functionally, guanine nucleotide-binding proteins (G proteins) are involved as modulators or transducers in various transmembrane signaling systems. Acts in concert with npr-15 to activate TGF-beta-like daf-7 secretion in the ASI neuron, thereby promoting larval development and inhibition of dauer diapause. The chain is Guanine nucleotide-binding protein alpha-4 subunit (gpa-4) from Caenorhabditis elegans.